Consider the following 117-residue polypeptide: Class I hydrophobin 2 (117 aa).

The N-terminal stretch at 1-21 (EIVSLSLSLLAVVPLVVLVIA) is a signal peptide. Intrachain disulfides connect Cys35-Cys96, Cys42-Cys90, Cys43-Cys76, and Cys97-Cys110.

Belongs to the fungal hydrophobin family. Self-assembles to form functional amyloid fibrils called rodlets. Self-assembly into fibrillar rodlets occurs spontaneously at hydrophobic:hydrophilic interfaces and the rodlets further associate laterally to form amphipathic monolayers.

It is found in the secreted. The protein localises to the cell wall. Functionally, aerial growth, conidiation, and dispersal of filamentous fungi in the environment rely upon a capability of their secreting small amphipathic proteins called hydrophobins (HPBs) with low sequence identity. Class I can self-assemble into an outermost layer of rodlet bundles on aerial cell surfaces, conferring cellular hydrophobicity that supports fungal growth, development and dispersal; whereas Class II form highly ordered films at water-air interfaces through intermolecular interactions but contribute nothing to the rodlet structure. The sequence is that of Class I hydrophobin 2 from Pisolithus tinctorius (Dead man's foot).